The chain runs to 253 residues: MKIKIGKVEKRLNQIIEEEGAVYLTLLDPEEENIEEIAENVKDYADAIMVGGSIGIVNLDETVKKIKKITKLPIILFPGNVDGLSRYADAVFYMSLMNSANTYWVVTAPTLGAITILKYNLEPIPMAYLCIEPAKKTAVGYVGEIREIPQNKPKITAMYCLSAKFFGMRWAYLEAGSGASYPVNNETIALSKKLSGINIIVGGGIRKPEIAYEKVLAGADAIVTGNLLEENPKAVEMMYDAIKKAGKEKLKNK.

Mg(2+) contacts are provided by Asp-28 and Ser-53. Residues 172–178, 203–204, and 225–226 contribute to the sn-glycerol 1-phosphate site; these read YLEAGSG, GG, and GN.

The protein belongs to the GGGP/HepGP synthase family. Group II subfamily. The cofactor is Mg(2+).

It localises to the cytoplasm. It carries out the reaction sn-glycerol 1-phosphate + (2E,6E,10E)-geranylgeranyl diphosphate = sn-3-O-(geranylgeranyl)glycerol 1-phosphate + diphosphate. The protein operates within membrane lipid metabolism; glycerophospholipid metabolism. Prenyltransferase that catalyzes the transfer of the geranylgeranyl moiety of geranylgeranyl diphosphate (GGPP) to the C3 hydroxyl of sn-glycerol-1-phosphate (G1P). This reaction is the first ether-bond-formation step in the biosynthesis of archaeal membrane lipids. The protein is Geranylgeranylglyceryl phosphate synthase of Methanocaldococcus jannaschii (strain ATCC 43067 / DSM 2661 / JAL-1 / JCM 10045 / NBRC 100440) (Methanococcus jannaschii).